The chain runs to 1428 residues: DNA-directed RNA polymerase subunit beta' (1428 aa).

Zn(2+)-binding residues include Cys-66, Cys-68, Cys-81, and Cys-84. Residues Asp-472, Asp-474, and Asp-476 each coordinate Mg(2+). Residues Cys-816, Cys-890, Cys-897, and Cys-900 each contribute to the Zn(2+) site.

Belongs to the RNA polymerase beta' chain family. In terms of assembly, the RNAP catalytic core consists of 2 alpha, 1 beta, 1 beta' and 1 omega subunit. When a sigma factor is associated with the core the holoenzyme is formed, which can initiate transcription. Requires Mg(2+) as cofactor. Zn(2+) serves as cofactor.

It catalyses the reaction RNA(n) + a ribonucleoside 5'-triphosphate = RNA(n+1) + diphosphate. In terms of biological role, DNA-dependent RNA polymerase catalyzes the transcription of DNA into RNA using the four ribonucleoside triphosphates as substrates. The sequence is that of DNA-directed RNA polymerase subunit beta' from Phocaeicola vulgatus (strain ATCC 8482 / DSM 1447 / JCM 5826 / CCUG 4940 / NBRC 14291 / NCTC 11154) (Bacteroides vulgatus).